Consider the following 395-residue polypeptide: XK-related protein 8 (395 aa).

Residues Met1 to Asp12 are Cytoplasmic-facing. A helical membrane pass occupies residues Leu13–Ala33. The Extracellular segment spans residues Ala34–Ala47. A helical transmembrane segment spans residues Leu48–Leu68. The Cytoplasmic portion of the chain corresponds to Arg69 to Arg158. A helical transmembrane segment spans residues Ala159 to Leu179. Topologically, residues Asp180–Ser200 are extracellular. Residues Val201–Phe221 traverse the membrane as a helical segment. Over Ser222–Ala223 the chain is Cytoplasmic. Residues Leu224–Val244 form a helical membrane-spanning segment. At Trp245–Glu258 the chain is on the extracellular side. Residues Trp259 to Gly279 form a helical membrane-spanning segment. The Cytoplasmic portion of the chain corresponds to Arg280–Arg284. A helical membrane pass occupies residues Ala285–Thr305. Residues His306–Ser312 lie on the Extracellular side of the membrane. Residues Gly313–Leu333 form a helical membrane-spanning segment. Over Arg334–Gly395 the chain is Cytoplasmic. Ser362 is modified (phosphoserine). Thr375 is modified (phosphothreonine).

The protein belongs to the XK family. Interacts with BSG and NPTN; which act as chaperones to localize XKR8 at the cell membrane. As to quaternary structure, homodimer. Undergoes proteolytic processing by caspase-3 (CASP3), leading to its activation. Post-translationally, phosphorylation at Thr-375 activates the phospholipid scramblase activity.

The protein resides in the cell membrane. Its subcellular location is the cytoplasm. It is found in the perinuclear region. The enzyme catalyses a 1,2-diacyl-sn-glycero-3-phospho-L-serine(in) = a 1,2-diacyl-sn-glycero-3-phospho-L-serine(out). Its activity is regulated as follows. Activated upon caspase cleavage to generate the XK-related protein 8, processed form. Does not act prior the onset of apoptosis. Phospholipid scramblase that promotes phosphatidylserine exposure on apoptotic cell surface. Phosphatidylserine is a specific marker only present at the surface of apoptotic cells and acts as a specific signal for engulfment. Required for the clearance of apoptotic cells, such as engulfment of apoptotic germ cells by Sertoli cells, clearance of senescent neutrophils or regulation of bipolar cell numbers in the retina. Has no effect on calcium-induced exposure of phosphatidylserine. Promotes myoblast differentiation and survival. In Pan troglodytes (Chimpanzee), this protein is XK-related protein 8.